Consider the following 1017-residue polypeptide: Semaphorin-6D (1017 aa).

Residues 1–20 (MRVFLLCAYILLLMISQLRA) form the signal peptide. The Extracellular segment spans residues 21-606 (VSFPEDDEPL…GESNQMVHMN (586 aa)). The 486-residue stretch at 27 to 512 (DEPLNTVDYH…FSSCVIRIPL (486 aa)) folds into the Sema domain. Asn-51 carries an N-linked (GlcNAc...) asparagine glycan. Cystine bridges form between Cys-108-Cys-118, Cys-136-Cys-145, Cys-259-Cys-370, and Cys-284-Cys-329. Asn-283 carries an N-linked (GlcNAc...) asparagine glycan. Asn-435 and Asn-461 each carry an N-linked (GlcNAc...) asparagine glycan. Intrachain disulfides connect Cys-477/Cys-506, Cys-515/Cys-533, Cys-521/Cys-568, and Cys-525/Cys-541. The region spanning 514–569 (RCERYGSCKKSCIASRDPYCGWLSQGSCGRVTPGMLAEGYEQDAEFGNTAHLGDCH) is the PSI domain. Residues 607–627 (VLITCVFAAFVLGAFIAGVAV) form a helical membrane-spanning segment. At 628–1017 (YCYRDMFVRK…SVRPLNKYTY (390 aa)) the chain is on the cytoplasmic side. Ser-667, Ser-678, and Ser-688 each carry phosphoserine. Disordered stretches follow at residues 688 to 719 (SRKE…PTPE), 731 to 769 (AMKS…GHIP), 783 to 818 (TSFS…RSVD), and 873 to 912 (LYSP…HKNS). Residue Thr-717 is modified to Phosphothreonine. Basic and acidic residues predominate over residues 734 to 749 (SHSEKAHGHGASRKET). Phosphoserine occurs at positions 875, 901, and 927. Residues 875–886 (SPPSTLPRNSPT) are compositionally biased toward polar residues. Polar residues predominate over residues 965-981 (LQPSLSRQSSYTSNGTL). The segment at 965-1017 (LQPSLSRQSSYTSNGTLPRTGLKRTPSLKPDVPPKPSFVPQTPSVRPLNKYTY) is disordered.

It belongs to the semaphorin family.

The protein resides in the cell membrane. Functionally, shows growth cone collapsing activity on dorsal root ganglion (DRG) neurons in vitro. May be a stop signal for the DRG neurons in their target areas, and possibly also for other neurons. May also be involved in the maintenance and remodeling of neuronal connections. Ligand of TREM2 with PLXNA1 as coreceptor in dendritic cells, plays a role in the generation of immune responses and skeletal homeostasis. The sequence is that of Semaphorin-6D (SEMA6D) from Pongo abelii (Sumatran orangutan).